A 332-amino-acid polypeptide reads, in one-letter code: Glycerol-3-phosphate dehydrogenase [NAD(P)+] (332 aa).

The NADPH site is built by Ser11, Phe12, Lys32, and Lys106. Sn-glycerol 3-phosphate contacts are provided by Lys106, Gly137, and Ser139. Residue Ala141 participates in NADPH binding. 5 residues coordinate sn-glycerol 3-phosphate: Lys192, Asp245, Ser255, Arg256, and Asn257. Residue Lys192 is the Proton acceptor of the active site. Residue Arg256 participates in NADPH binding. 2 residues coordinate NADPH: Val280 and Glu282.

Belongs to the NAD-dependent glycerol-3-phosphate dehydrogenase family.

The protein localises to the cytoplasm. The catalysed reaction is sn-glycerol 3-phosphate + NAD(+) = dihydroxyacetone phosphate + NADH + H(+). It catalyses the reaction sn-glycerol 3-phosphate + NADP(+) = dihydroxyacetone phosphate + NADPH + H(+). Its pathway is membrane lipid metabolism; glycerophospholipid metabolism. Catalyzes the reduction of the glycolytic intermediate dihydroxyacetone phosphate (DHAP) to sn-glycerol 3-phosphate (G3P), the key precursor for phospholipid synthesis. The polypeptide is Glycerol-3-phosphate dehydrogenase [NAD(P)+] (Staphylococcus aureus (strain USA300)).